A 450-amino-acid chain; its full sequence is Tubulin beta-2 chain (450 aa).

Residues glutamine 11, glutamate 69, serine 138, glycine 142, threonine 143, glycine 144, asparagine 204, and asparagine 226 each contribute to the GTP site. Glutamate 69 lines the Mg(2+) pocket. The segment at 428–450 (ATAEDDVDGYAEGEAGETYESEQ) is disordered. The span at 429-450 (TAEDDVDGYAEGEAGETYESEQ) shows a compositional bias: acidic residues.

It belongs to the tubulin family. In terms of assembly, dimer of alpha and beta chains. A typical microtubule is a hollow water-filled tube with an outer diameter of 25 nm and an inner diameter of 15 nm. Alpha-beta heterodimers associate head-to-tail to form protofilaments running lengthwise along the microtubule wall with the beta-tubulin subunit facing the microtubule plus end conferring a structural polarity. Microtubules usually have 13 protofilaments but different protofilament numbers can be found in some organisms and specialized cells. It depends on Mg(2+) as a cofactor. In terms of processing, cleaved by caspase ced-3 in vitro.

The protein resides in the cytoplasm. It is found in the cytoskeleton. Tubulin is the major constituent of microtubules, a cylinder consisting of laterally associated linear protofilaments composed of alpha- and beta-tubulin heterodimers. Microtubules grow by the addition of GTP-tubulin dimers to the microtubule end, where a stabilizing cap forms. Below the cap, tubulin dimers are in GDP-bound state, owing to GTPase activity of alpha-tubulin. Required for the normal dynamic behavior of the non-centrosomal microtubules in the epidermal syncytium. Involved in the redistribution of microtubule end-binding protein EB1/ebp-2 caused by wounding. Required to modulate expression in the epidermis of antimicrobial peptides, such as nlp-29, after wounding, or fungal infection. The protein is Tubulin beta-2 chain (tbb-2) of Caenorhabditis elegans.